A 315-amino-acid chain; its full sequence is 4-hydroxy-3-methylbut-2-enyl diphosphate reductase (315 aa).

A [4Fe-4S] cluster-binding site is contributed by Cys-12. Residues His-41 and His-74 each coordinate (2E)-4-hydroxy-3-methylbut-2-enyl diphosphate. Dimethylallyl diphosphate contacts are provided by His-41 and His-74. Isopentenyl diphosphate contacts are provided by His-41 and His-74. Cys-96 lines the [4Fe-4S] cluster pocket. His-124 contacts (2E)-4-hydroxy-3-methylbut-2-enyl diphosphate. His-124 is a dimethylallyl diphosphate binding site. His-124 contributes to the isopentenyl diphosphate binding site. Glu-126 (proton donor) is an active-site residue. A (2E)-4-hydroxy-3-methylbut-2-enyl diphosphate-binding site is contributed by Thr-168. Cys-198 is a binding site for [4Fe-4S] cluster. (2E)-4-hydroxy-3-methylbut-2-enyl diphosphate-binding residues include Ser-226, Ser-227, Asn-228, and Ser-270. Dimethylallyl diphosphate contacts are provided by Ser-226, Ser-227, Asn-228, and Ser-270. Ser-226, Ser-227, Asn-228, and Ser-270 together coordinate isopentenyl diphosphate.

Belongs to the IspH family. The cofactor is [4Fe-4S] cluster.

The catalysed reaction is isopentenyl diphosphate + 2 oxidized [2Fe-2S]-[ferredoxin] + H2O = (2E)-4-hydroxy-3-methylbut-2-enyl diphosphate + 2 reduced [2Fe-2S]-[ferredoxin] + 2 H(+). It carries out the reaction dimethylallyl diphosphate + 2 oxidized [2Fe-2S]-[ferredoxin] + H2O = (2E)-4-hydroxy-3-methylbut-2-enyl diphosphate + 2 reduced [2Fe-2S]-[ferredoxin] + 2 H(+). It participates in isoprenoid biosynthesis; dimethylallyl diphosphate biosynthesis; dimethylallyl diphosphate from (2E)-4-hydroxy-3-methylbutenyl diphosphate: step 1/1. The protein operates within isoprenoid biosynthesis; isopentenyl diphosphate biosynthesis via DXP pathway; isopentenyl diphosphate from 1-deoxy-D-xylulose 5-phosphate: step 6/6. Catalyzes the conversion of 1-hydroxy-2-methyl-2-(E)-butenyl 4-diphosphate (HMBPP) into a mixture of isopentenyl diphosphate (IPP) and dimethylallyl diphosphate (DMAPP). Acts in the terminal step of the DOXP/MEP pathway for isoprenoid precursor biosynthesis. This chain is 4-hydroxy-3-methylbut-2-enyl diphosphate reductase, found in Pseudomonas putida (strain W619).